Here is a 140-residue protein sequence, read N- to C-terminus: MAVQRTFSIIKPDATERNLTGAINAVIEKAGLRIVGQRRIQMTRAQAERFYSVHSARPFFGELVDFMISGPVVVQVLEAEDAITKYREVMGATNPADAADGTIRKLFAKSIGENSVHGSDSAENAALEIAQFFSEADLTN.

ATP contacts are provided by Lys-11, Phe-59, Arg-87, Thr-93, Arg-104, and Asn-114. His-117 (pros-phosphohistidine intermediate) is an active-site residue.

It belongs to the NDK family. Homotetramer. It depends on Mg(2+) as a cofactor.

Its subcellular location is the cytoplasm. It carries out the reaction a 2'-deoxyribonucleoside 5'-diphosphate + ATP = a 2'-deoxyribonucleoside 5'-triphosphate + ADP. The catalysed reaction is a ribonucleoside 5'-diphosphate + ATP = a ribonucleoside 5'-triphosphate + ADP. Its function is as follows. Major role in the synthesis of nucleoside triphosphates other than ATP. The ATP gamma phosphate is transferred to the NDP beta phosphate via a ping-pong mechanism, using a phosphorylated active-site intermediate. The polypeptide is Nucleoside diphosphate kinase (Hyphomonas neptunium (strain ATCC 15444)).